The following is a 502-amino-acid chain: Keratin, type II cytoskeletal 8 (502 aa).

Residues 1-98 are head; sequence MSVRSTKVTY…DPSIQQVRTE (98 aa). S13, S26, S37, and S40 each carry phosphoserine. The interval 99-134 is coil 1A; the sequence is EKEQIKTLNNKFASFIDKVRFLEQQNKMLETKWNLL. An IF rod domain is found at 99-410; it reads EKEQIKTLNN…KLLEGEESRL (312 aa). A linker 1 region spans residues 135–151; that stretch reads QNQKTTRSNMDGMFEAY. A coil 1B region spans residues 152–243; sequence ISNLRRQLDG…QLYEEELREM (92 aa). The linker 12 stretch occupies residues 244–267; that stretch reads QSQISDTSVVLSMDNNRSLDLDGI. The interval 268-406 is coil 2; sequence IAEVRAQYED…ATYRKLLEGE (139 aa). A necessary for interaction with PNN region spans residues 269–390; that stretch reads AEVRAQYEDV…DYQELMNVKL (122 aa). The tract at residues 407–502 is tail; the sequence is ESRLESGFQN…SESSDVFSKP (96 aa). Residues S425, S428, S436, and S444 each carry the phosphoserine modification.

It belongs to the intermediate filament family. Heterotetramer of two type I and two type II keratins. Keratin-8 associates with keratin-18. As to expression, expressed in oocytes, eggs, embryos, liver and intestinal mucosa.

The protein resides in the cytoplasm. It localises to the nucleus. The protein localises to the nucleoplasm. It is found in the nucleus matrix. In terms of biological role, together with KRT19, helps to link the contractile apparatus to dystrophin at the costameres of striated muscle. The chain is Keratin, type II cytoskeletal 8 from Xenopus laevis (African clawed frog).